The chain runs to 113 residues: T cell receptor alpha variable 5 (113 aa).

The signal sequence occupies residues 1 to 22 (MKTFAGFSFLFLWLQLDCMSRG). Residues 23-113 (EDVEQSLFLS…DSAIYFCAES (91 aa)) enclose the Ig-like domain. Asn-42 is a glycosylation site (N-linked (GlcNAc...) asparagine). A disulfide bridge connects residues Cys-43 and Cys-110.

In terms of assembly, alpha-beta TR is a heterodimer composed of an alpha and beta chain; disulfide-linked. The alpha-beta TR is associated with the transmembrane signaling CD3 coreceptor proteins to form the TR-CD3 (TcR or TCR). The assembly of alpha-beta TR heterodimers with CD3 occurs in the endoplasmic reticulum where a single alpha-beta TR heterodimer associates with one CD3D-CD3E heterodimer, one CD3G-CD3E heterodimer and one CD247 homodimer forming a stable octameric structure. CD3D-CD3E and CD3G-CD3E heterodimers preferentially associate with TR alpha and TR beta chains, respectively. The association of the CD247 homodimer is the last step of TcR assembly in the endoplasmic reticulum and is required for transport to the cell surface.

Its subcellular location is the cell membrane. In terms of biological role, v region of the variable domain of T cell receptor (TR) alpha chain that participates in the antigen recognition. Alpha-beta T cell receptors are antigen specific receptors which are essential to the immune response and are present on the cell surface of T lymphocytes. Recognize peptide-major histocompatibility (MH) (pMH) complexes that are displayed by antigen presenting cells (APC), a prerequisite for efficient T cell adaptive immunity against pathogens. Binding of alpha-beta TR to pMH complex initiates TR-CD3 clustering on the cell surface and intracellular activation of LCK that phosphorylates the ITAM motifs of CD3G, CD3D, CD3E and CD247 enabling the recruitment of ZAP70. In turn ZAP70 phosphorylates LAT, which recruits numerous signaling molecules to form the LAT signalosome. The LAT signalosome propagates signal branching to three major signaling pathways, the calcium, the mitogen-activated protein kinase (MAPK) kinase and the nuclear factor NF-kappa-B (NF-kB) pathways, leading to the mobilization of transcription factors that are critical for gene expression and essential for T cell growth and differentiation. The T cell repertoire is generated in the thymus, by V-(D)-J rearrangement. This repertoire is then shaped by intrathymic selection events to generate a peripheral T cell pool of self-MH restricted, non-autoaggressive T cells. Post-thymic interaction of alpha-beta TR with the pMH complexes shapes TR structural and functional avidity. This chain is T cell receptor alpha variable 5, found in Homo sapiens (Human).